The primary structure comprises 264 residues: 3-methyl-2-oxobutanoate hydroxymethyltransferase (264 aa).

Residues D45 and D84 each contribute to the Mg(2+) site. 3-methyl-2-oxobutanoate is bound by residues 45-46 (DS), D84, and K112. E114 lines the Mg(2+) pocket. The active-site Proton acceptor is E181.

The protein belongs to the PanB family. In terms of assembly, homodecamer; pentamer of dimers. Mg(2+) serves as cofactor.

The protein localises to the cytoplasm. It catalyses the reaction 3-methyl-2-oxobutanoate + (6R)-5,10-methylene-5,6,7,8-tetrahydrofolate + H2O = 2-dehydropantoate + (6S)-5,6,7,8-tetrahydrofolate. Its pathway is cofactor biosynthesis; (R)-pantothenate biosynthesis; (R)-pantoate from 3-methyl-2-oxobutanoate: step 1/2. Catalyzes the reversible reaction in which hydroxymethyl group from 5,10-methylenetetrahydrofolate is transferred onto alpha-ketoisovalerate to form ketopantoate. The chain is 3-methyl-2-oxobutanoate hydroxymethyltransferase from Shewanella sp. (strain ANA-3).